We begin with the raw amino-acid sequence, 149 residues long: Arginine repressor (149 aa).

The protein belongs to the ArgR family.

It localises to the cytoplasm. Its pathway is amino-acid biosynthesis; L-arginine biosynthesis [regulation]. Its function is as follows. Regulates arginine biosynthesis genes. This is Arginine repressor from Listeria innocua serovar 6a (strain ATCC BAA-680 / CLIP 11262).